Consider the following 140-residue polypeptide: Alpha-lactalbumin (140 aa).

A signal peptide spans 1 to 19 (MMSLLSLLLLGIALPATQA). Residues 20-140 (IDYRKCQASQ…CIEDLDQWRC (121 aa)) form the C-type lysozyme domain. 4 disulfides stabilise this stretch: Cys25–Cys140, Cys47–Cys131, Cys80–Cys96, and Cys92–Cys110. A glycan (N-linked (GlcNAc...) asparagine) is linked at Asn63. Residues Lys98, Asp101, Asp103, Asp106, and Asp107 each contribute to the Ca(2+) site.

Belongs to the glycosyl hydrolase 22 family. Lactose synthase (LS) is a heterodimer of a catalytic component, beta1,4-galactosyltransferase (beta4Gal-T1) and a regulatory component, alpha-lactalbumin (LA). As to expression, mammary gland specific. Secreted in milk.

The protein resides in the secreted. In terms of biological role, regulatory subunit of lactose synthase, changes the substrate specificity of galactosyltransferase in the mammary gland making glucose a good acceptor substrate for this enzyme. This enables LS to synthesize lactose, the major carbohydrate component of milk. In other tissues, galactosyltransferase transfers galactose onto the N-acetylglucosamine of the oligosaccharide chains in glycoproteins. This chain is Alpha-lactalbumin (LALBA), found in Notamacropus eugenii (Tammar wallaby).